Consider the following 284-residue polypeptide: 4-hydroxybenzoate octaprenyltransferase (284 aa).

A run of 7 helical transmembrane segments spans residues 33-53, 93-113, 136-156, 159-179, 209-229, 231-248, and 264-284; these read VIAA…LGVF, IGLF…MNPL, YLPQ…AWAA, GELP…TIAY, LVIG…GQHY, LGQS…LFVY, and AFLN…IAFW.

Belongs to the UbiA prenyltransferase family. Requires Mg(2+) as cofactor.

The protein localises to the cell inner membrane. The catalysed reaction is all-trans-octaprenyl diphosphate + 4-hydroxybenzoate = 4-hydroxy-3-(all-trans-octaprenyl)benzoate + diphosphate. Its pathway is cofactor biosynthesis; ubiquinone biosynthesis. Functionally, catalyzes the prenylation of para-hydroxybenzoate (PHB) with an all-trans polyprenyl group. Mediates the second step in the final reaction sequence of ubiquinone-8 (UQ-8) biosynthesis, which is the condensation of the polyisoprenoid side chain with PHB, generating the first membrane-bound Q intermediate 3-octaprenyl-4-hydroxybenzoate. The protein is 4-hydroxybenzoate octaprenyltransferase of Vibrio campbellii (strain ATCC BAA-1116).